We begin with the raw amino-acid sequence, 1463 residues long: DNA polymerase III PolC-type (1463 aa).

The Exonuclease domain occupies 425–581; sequence YVVFDVETTG…YDAEATGRLL (157 aa).

Belongs to the DNA polymerase type-C family. PolC subfamily.

It is found in the cytoplasm. It catalyses the reaction DNA(n) + a 2'-deoxyribonucleoside 5'-triphosphate = DNA(n+1) + diphosphate. Its function is as follows. Required for replicative DNA synthesis. This DNA polymerase also exhibits 3' to 5' exonuclease activity. The protein is DNA polymerase III PolC-type of Streptococcus pneumoniae serotype 4 (strain ATCC BAA-334 / TIGR4).